The sequence spans 1515 residues: DNA topoisomerase 2-binding protein 1 (1515 aa).

2 BRCT domains span residues 101-189 (VYNM…KYTD) and 195-284 (FKCP…IYKA). Position 298 is a phosphothreonine (T298). 3 consecutive BRCT domains span residues 353–443 (APED…SYIH), 551–636 (REEG…SNPL), and 644–741 (SGVT…HFLV). Residues 759 to 893 (VSSNPDLPAH…TDSHSASPQL (135 aa)) form an interaction with CIP2A region. T782 is modified (phosphothreonine). The tract at residues 799-826 (SQQRGQDPTFPPVRQPLTKEPSLHLDTP) is disordered. Residue T851 is modified to Phosphothreonine. A phosphoserine mark is found at S862, S863, S866, S888, and S890. A compositionally biased stretch (polar residues) spans 880–891 (SSRNTDSHSASP). The disordered stretch occupies residues 880–901 (SSRNTDSHSASPQLKGAHLEEE). One can recognise a BRCT 6 domain in the interval 902-993 (ETRKPLDSVV…KHLPESLYPH (92 aa)). A disordered region spans residues 1020–1055 (VSASKDDGPDHLSVEGNETNTMGTNDKESPLLNGSG). Basic and acidic residues predominate over residues 1023–1032 (SKDDGPDHLS). Phosphothreonine is present on T1064. Residues 1097–1116 (SRSSCNSASSTPDSARSVRS) are compositionally biased toward low complexity. Disordered regions lie at residues 1097–1119 (SRSS…SGRS), 1203–1255 (VTQA…TQEE), and 1491–1515 (KKGG…PRVH). Over residues 1217–1229 (PPVAERPLIPEPQ) the composition is skewed to pro residues. The region spanning 1255–1347 (ETHRKVKKQY…RFVQEEDYEW (93 aa)) is the BRCT 7 domain. Positions 1510–1513 (KRPR) match the Nuclear localization signal motif.

Belongs to the TOPBP1 family. In terms of assembly, interacts (via BRCT domains 1 and 2) with (phosphorylated) MDC1; promoting TOPBP1 recruitment to DNA damage sites during mitosis. Interacts (via BRCT domains 7 and 8) with (autophosphorylated) ATR; promoting activation of ATR. Interacts (via BRCT domains 7 and 8) with (phosphorylated) POLQ; specifically binds POLQ phosphorylated by PLK1, promoting POLQ recruitment to DNA damage sites. Interacts (via BRCT domains 1 and 2) with (phosphorylated) RAD9A. Interacts (via BRCT domain 2) with (phosphorylated) TP53BP1. Interacts (via BRCT domain 2) with (phosphorylated) HTATSF1. Interacts (via BRCT domains 7 and 8) with (phosphorylated) RAD51; promoting RAD51 recruitment to damaged chromatin. Interacts with CIP2A; forming the CIP2A-TOPBP1 complex. Interacts with POLE. Interacts with UBR5. Interacts with E2F1. Interacts with PML. Interacts with SMARCA2. Interacts with SMARCA4. Interacts with RHNO1. May interact with TOP2B. Interacts with TICRR. Interacts with HELB. Post-translationally, phosphorylated on serine and threonine residues in response to X-ray irradiation. In terms of processing, ubiquitinated and degraded by the proteasome. X-ray irradiation reduces ubiquitination. Deubiquitinated by USP13; leading to TOPBP1 stabilizion and activation of the ATR-TOPBP1 axis pathway. In terms of tissue distribution, highly expressed in testis.

The protein localises to the nucleus. The protein resides in the chromosome. Its subcellular location is the cytoplasm. It is found in the cytoskeleton. It localises to the microtubule organizing center. The protein localises to the centrosome. The protein resides in the spindle pole. Scaffold protein that acts as a key protein-protein adapter in DNA replication and DNA repair. Composed of multiple BRCT domains, which specifically recognize and bind phosphorylated proteins, bringing proteins together into functional combinations. Required for DNA replication initiation but not for the formation of pre-replicative complexes or the elongation stages. Necessary for the loading of replication factors onto chromatin, including GMNC, CDC45, DNA polymerases and components of the GINS complex. Plays a central role in DNA repair by bridging proteins and promoting recruitment of proteins to DNA damage sites. Involved in double-strand break (DSB) repair via homologous recombination in S-phase by promoting the exchange between the DNA replication factor A (RPA) complex and RAD51. Mechanistically, TOPBP1 is recruited to DNA damage sites in S-phase via interaction with phosphorylated HTATSF1, and promotes the loading of RAD51, thereby facilitating RAD51 nucleofilaments formation and RPA displacement, followed by homologous recombination. Involved in microhomology-mediated end-joining (MMEJ) DNA repair by promoting recruitment of polymerase theta (POLQ) to DNA damage sites during mitosis. MMEJ is an alternative non-homologous end-joining (NHEJ) machinery that takes place during mitosis to repair DSBs in DNA that originate in S-phase. Recognizes and binds POLQ phosphorylated by PLK1, enabling its recruitment to DSBs for subsequent repair. Involved in G1 DNA damage checkpoint by acting as a molecular adapter that couples TP53BP1 and the 9-1-1 complex. In response to DNA damage, triggers the recruitment of checkpoint signaling proteins on chromatin, which activate the CHEK1 signaling pathway and block S-phase progression. Acts as an activator of the kinase activity of ATR. Also required for chromosomal stability when DSBs occur during mitosis by forming filamentous assemblies that bridge MDC1 and tether broken chromosomes during mitosis. Together with CIP2A, plays an essential role in the response to genome instability generated by the presence of acentric chromosome fragments derived from shattered chromosomes within micronuclei. Micronuclei, which are frequently found in cancer cells, consist of chromatin surrounded by their own nuclear membrane: following breakdown of the micronuclear envelope, a process associated with chromothripsis, the CIP2A-TOPBP1 complex tethers chromosome fragments during mitosis to ensure clustered segregation of the fragments to a single daughter cell nucleus, facilitating re-ligation with limited chromosome scattering and loss. Recruits the SWI/SNF chromatin remodeling complex to E2F1-responsive promoters, thereby down-regulating E2F1 activity and inhibiting E2F1-dependent apoptosis during G1/S transition and after DNA damage. The protein is DNA topoisomerase 2-binding protein 1 of Mus musculus (Mouse).